The sequence spans 192 residues: PBAN-type neuropeptides (192 aa).

A signal peptide spans 1–23 (MYKTNIVFNVLALALFSIFFASC). Leucine amide is present on leucine 47. Residues 51-94 (SMKPSTEDNRQTFLRLLEAADALKFYYDQLPYERQADEPETKVT) constitute a propeptide that is removed on maturation. Leucine amide is present on residues leucine 103, leucine 122, leucine 158, and leucine 168. Positions 171 to 192 (ELSYDYPTKYRVARSVNKTMDN) are excised as a propeptide.

It belongs to the pyrokinin family. As to expression, expression is restricted to the subesophageal ganglion.

Its subcellular location is the secreted. Functionally, a hormone that controls sex pheromone production in females and pheromone responsiveness in male. Also mediates visceral muscle contractile activity (myotropic activity). Identical to MRCH which is implicated in the formation of both melanin in the cuticle and ommochrome in the epidermis of armyworm species. Its function is as follows. Diapause hormone (DH) is responsible for induction of embryonic diapause. In terms of biological role, the three SGNPS are far less active than DH in inducing diapause eggs. Beta-SGNP expressed higher pban activity than PBAN-I, but alpha- and gamma-SGNP were far less active in pheromonotropic activity. This Bombyx mori (Silk moth) protein is PBAN-type neuropeptides.